We begin with the raw amino-acid sequence, 251 residues long: Flap endonuclease Xni (251 aa).

Asp-104 lines the Mg(2+) pocket. In terms of domain architecture, 5'-3' exonuclease spans 160–249 (VQPQQLPDYW…IDGNLQQLRL (90 aa)). 5 residues coordinate K(+): Leu-171, Ala-172, Pro-180, Val-182, and Ile-185. The interval 184–189 (GIGPKS) is interaction with DNA.

This sequence belongs to the Xni family. Mg(2+) is required as a cofactor. K(+) serves as cofactor.

In terms of biological role, has flap endonuclease activity. During DNA replication, flap endonucleases cleave the 5'-overhanging flap structure that is generated by displacement synthesis when DNA polymerase encounters the 5'-end of a downstream Okazaki fragment. This chain is Flap endonuclease Xni, found in Escherichia coli O45:K1 (strain S88 / ExPEC).